A 611-amino-acid polypeptide reads, in one-letter code: 1,4-alpha-glucan branching enzyme GlgB (611 aa).

Aspartate 302 serves as the catalytic Nucleophile. The active-site Proton donor is glutamate 343.

Belongs to the glycosyl hydrolase 13 family. GlgB subfamily. In terms of assembly, monomer.

It carries out the reaction Transfers a segment of a (1-&gt;4)-alpha-D-glucan chain to a primary hydroxy group in a similar glucan chain.. The protein operates within glycan biosynthesis; glycogen biosynthesis. Its function is as follows. Catalyzes the formation of the alpha-1,6-glucosidic linkages in glycogen by scission of a 1,4-alpha-linked oligosaccharide from growing alpha-1,4-glucan chains and the subsequent attachment of the oligosaccharide to the alpha-1,6 position. The protein is 1,4-alpha-glucan branching enzyme GlgB of Fusobacterium nucleatum subsp. nucleatum (strain ATCC 25586 / DSM 15643 / BCRC 10681 / CIP 101130 / JCM 8532 / KCTC 2640 / LMG 13131 / VPI 4355).